A 208-amino-acid polypeptide reads, in one-letter code: Uridine kinase (208 aa).

11–18 serves as a coordination point for ATP; it reads GGTGSGKS.

The protein belongs to the uridine kinase family.

The protein localises to the cytoplasm. It carries out the reaction uridine + ATP = UMP + ADP + H(+). The catalysed reaction is cytidine + ATP = CMP + ADP + H(+). It functions in the pathway pyrimidine metabolism; CTP biosynthesis via salvage pathway; CTP from cytidine: step 1/3. The protein operates within pyrimidine metabolism; UMP biosynthesis via salvage pathway; UMP from uridine: step 1/1. This Clostridium perfringens (strain SM101 / Type A) protein is Uridine kinase.